The primary structure comprises 152 residues: uncharacterized protein (152 aa).

A compositionally biased stretch (basic residues) spans Met1–Lys13. Disordered regions lie at residues Met1 to Arg28 and Asn75 to Glu152. Pro residues-rich tracts occupy residues Pro15–Pro26 and Pro80–Pro92. Residues Asp133 to Glu152 are compositionally biased toward acidic residues.

This is an uncharacterized protein from Pan troglodytes (Chimpanzee).